The primary structure comprises 128 residues: Ribonuclease pancreatic (128 aa).

The segment at 1–25 (KESSAKKFQRQHIDSSGSPSTNPNY) is disordered. Substrate is bound by residues lysine 7 and arginine 10. Histidine 12 acts as the Proton acceptor in catalysis. Polar residues predominate over residues 14 to 25 (DSSGSPSTNPNY). 4 cysteine pairs are disulfide-bonded: cysteine 26/cysteine 84, cysteine 40/cysteine 95, cysteine 58/cysteine 110, and cysteine 65/cysteine 72. Asparagine 34 is a glycosylation site (N-linked (GlcNAc...) asparagine). Substrate-binding positions include 41 to 45 (KPVNT), lysine 66, and arginine 85. The active-site Proton donor is the histidine 119.

This sequence belongs to the pancreatic ribonuclease family. As to quaternary structure, monomer. Interacts with and forms tight 1:1 complexes with RNH1. Dimerization of two such complexes may occur. Interaction with RNH1 inhibits this protein. In terms of tissue distribution, pancreas.

It localises to the secreted. The enzyme catalyses an [RNA] containing cytidine + H2O = an [RNA]-3'-cytidine-3'-phosphate + a 5'-hydroxy-ribonucleotide-3'-[RNA].. The catalysed reaction is an [RNA] containing uridine + H2O = an [RNA]-3'-uridine-3'-phosphate + a 5'-hydroxy-ribonucleotide-3'-[RNA].. Its function is as follows. Endonuclease that catalyzes the cleavage of RNA on the 3' side of pyrimidine nucleotides. Acts on single-stranded and double-stranded RNA. In Proechimys guairae (Guaira spiny rat), this protein is Ribonuclease pancreatic (RNASE1).